A 357-amino-acid chain; its full sequence is Phosphate acyltransferase (357 aa).

It belongs to the PlsX family. As to quaternary structure, homodimer. Probably interacts with PlsY.

It is found in the cytoplasm. The catalysed reaction is a fatty acyl-[ACP] + phosphate = an acyl phosphate + holo-[ACP]. It participates in lipid metabolism; phospholipid metabolism. In terms of biological role, catalyzes the reversible formation of acyl-phosphate (acyl-PO(4)) from acyl-[acyl-carrier-protein] (acyl-ACP). This enzyme utilizes acyl-ACP as fatty acyl donor, but not acyl-CoA. The sequence is that of Phosphate acyltransferase from Herminiimonas arsenicoxydans.